A 1481-amino-acid chain; its full sequence is Cystic fibrosis transmembrane conductance regulator (1481 aa).

Residues 1 to 77 (MQRSPLEKAS…KLINALRRCF (77 aa)) lie on the Cytoplasmic side of the membrane. Residues 78–98 (FWRFMFYGILLYLGEVTKAVQ) form a helical membrane-spanning segment. An ABC transmembrane type-1 1 domain is found at 81-365 (FMFYGILLYL…WAVQTWYDSL (285 aa)). At 99–122 (PLLLGRIIASYDPDNKEERSIAIY) the chain is on the extracellular side. The chain crosses the membrane as a helical span at residues 123–146 (LGIGLCLLFIVRTLLLHPAIFGLH). The Cytoplasmic portion of the chain corresponds to 147–195 (HIGMQMRIAMFSLIYKKTLKLSSRVLDKISIGQLVSLLSNNLNKFDEGL). Residues 196-216 (ALAHFVWIVPLQVALLMGLIW) traverse the membrane as a helical segment. Topologically, residues 217-222 (ELLQAS) are extracellular. Residues 223 to 243 (AFCGLGFLIVLALFQAGLGRM) form a helical membrane-spanning segment. Topologically, residues 244 to 298 (MMKYRDQRAGKINERLVITSEMIENIQSVKAYCWEEAMEKMIENLRQTELKLTRK) are cytoplasmic. Residues 299-319 (AAYVRYFNSSAFFFSGFFVVF) traverse the membrane as a helical segment. Residues 320–339 (LSVLPYALIKGIVLRKIFTT) are Extracellular-facing. A helical membrane pass occupies residues 340–358 (ISFCIVLRMAVTRQFPWAV). Topologically, residues 359–858 (QTWYDSLGAI…YLRYITVHKS (500 aa)) are cytoplasmic. ATP is bound by residues Trp-401, Ser-434, 458-465 (GSTGAGKT), and Gln-493. The ABC transporter 1 domain occupies 423-646 (NDDDSLFFSN…RPDFSSKLMG (224 aa)). Cys-524 carries the S-palmitoyl cysteine lipid modification. Phosphoserine occurs at positions 549 and 660. Residues 654-831 (SAERRNSILT…EEINEEDLKE (178 aa)) form a disordered R region region. Ser-670 is modified (phosphoserine; by PKA). Position 686 is a phosphoserine (Ser-686). Lys-688 participates in a covalent cross-link: Glycyl lysine isopeptide (Lys-Gly) (interchain with G-Cter in ubiquitin). Ser-700 and Ser-712 each carry phosphoserine. Thr-717 is subject to Phosphothreonine. Residues Ser-737, Ser-753, Ser-768, Ser-790, Ser-795, and Ser-813 each carry the phosphoserine modification. The helical transmembrane segment at 859-879 (LIFVLIWCLVIFLAEVAASLV) threads the bilayer. The region spanning 859-1155 (LIFVLIWCLV…AVNSSIDVDS (297 aa)) is the ABC transmembrane type-1 2 domain. Residues 880–918 (VLWFLGNTPPQDKGNSTYSRNNSYAVIITRTSSYYVFYI) are Extracellular-facing. Residues Asn-894 and Asn-900 are each glycosylated (N-linked (GlcNAc...) asparagine). Residues 919–939 (YVGVADTLLAMGFFRGLPLVH) traverse the membrane as a discontinuously helical segment. Residues 940–990 (TLITVSKILHHKMLHSVLQAPMSTLNTLKAGGILNRFSKDIAILDDLLPLT) are Cytoplasmic-facing. Residues 991–1011 (IFDFIQLLLIVIGAIAVVAVL) form a helical membrane-spanning segment. Residues 1012–1013 (QP) are Extracellular-facing. Residues 1014 to 1034 (YIFVATVPVIVAFIMLRAYFL) form a helical membrane-spanning segment. Over 1035 to 1095 (QTSQQLKQLE…TANWFLYLST (61 aa)) the chain is Cytoplasmic. The chain crosses the membrane as a helical span at residues 1096–1116 (LRWFQMRIEMIFVIFFIAVTF). At 1117 to 1130 (ISILTTGEGEGTVG) the chain is on the extracellular side. A helical membrane pass occupies residues 1131 to 1151 (IILTLAMNIMSTLQWAVNSSI). The Cytoplasmic segment spans residues 1152–1481 (DVDSLMRSVS…TEEEVQDTRL (330 aa)). The 234-residue stretch at 1211–1444 (MTVKDLTAKY…RSLFRQAISP (234 aa)) folds into the ABC transporter 2 domain. Residues Tyr-1220 and 1245–1252 (GRTGSGKS) each bind ATP. The interval 1387–1481 (RTLKQAFADC…TEEEVQDTRL (95 aa)) is interaction with GORASP2. Cys-1396 carries the S-palmitoyl cysteine lipid modification. Phosphoserine occurs at positions 1445 and 1457. The PDZ-binding signature appears at 1479–1481 (TRL).

Belongs to the ABC transporter superfamily. ABCC family. CFTR transporter (TC 3.A.1.202) subfamily. In terms of assembly, monomer; does not require oligomerization for channel activity. May form oligomers in the membrane. Interacts with SLC26A3, SLC26A6 and NHERF1. Interacts with SHANK2. Interacts with MYO6. Interacts (via C-terminus) with GOPC (via PDZ domain); this promotes CFTR internalization and thereby decreases channel activity. Interacts with SLC4A7 through NHERF1. Found in a complex with MYO5B and RAB11A. Interacts with ANO1. Interacts with SLC26A8. Interacts with AHCYL1; the interaction increases CFTR activity. Interacts with CSE1L. The core-glycosylated form interacts with GORASP2 (via PDZ GRASP-type 1 domain) in respone to ER stress. Interacts with MARCHF2; the interaction leads to CFTR ubiqtuitination and degradation. Interacts with ADGRG2. In terms of processing, N-glycosylated. Post-translationally, phosphorylated; cAMP treatment promotes phosphorylation and activates the channel. Dephosphorylation decreases the ATPase activity (in vitro). Phosphorylation at PKA sites activates the channel. Phosphorylation at PKC sites enhances the response to phosphorylation by PKA. Phosphorylated by AMPK; this inhibits channel activity. Ubiquitinated, leading to its degradation in the lysosome. Deubiquitination by USP10 in early endosomes enhances its endocytic recycling to the cell membrane. Ubiquitinated by RNF185 during ER stress. Ubiquitinated by MARCHF2.

The protein resides in the apical cell membrane. The protein localises to the early endosome membrane. It localises to the cell membrane. It is found in the recycling endosome membrane. Its subcellular location is the endoplasmic reticulum membrane. The protein resides in the nucleus. The enzyme catalyses ATP + H2O + closed Cl(-) channel = ADP + phosphate + open Cl(-) channel.. It carries out the reaction chloride(in) = chloride(out). It catalyses the reaction hydrogencarbonate(in) = hydrogencarbonate(out). The catalysed reaction is ATP + H2O = ADP + phosphate + H(+). Epithelial ion channel that plays an important role in the regulation of epithelial ion and water transport and fluid homeostasis. Mediates the transport of chloride ions across the cell membrane. Possesses an intrinsic ATPase activity and utilizes ATP to gate its channel; the passive flow of anions through the channel is gated by cycles of ATP binding and hydrolysis by the ATP-binding domains. The ion channel is also permeable to HCO(3)(-); selectivity depends on the extracellular chloride concentration. Exerts its function also by modulating the activity of other ion channels and transporters. Contributes to the regulation of the pH and the ion content of the epithelial fluid layer. Modulates the activity of the epithelial sodium channel (ENaC) complex, in part by regulating the cell surface expression of the ENaC complex. May regulate bicarbonate secretion and salvage in epithelial cells by regulating the transporter SLC4A7. Can inhibit the chloride channel activity of ANO1. Plays a role in the chloride and bicarbonate homeostasis during sperm epididymal maturation and capacitation. The protein is Cystic fibrosis transmembrane conductance regulator of Macaca fascicularis (Crab-eating macaque).